Here is a 364-residue protein sequence, read N- to C-terminus: GDP-perosamine synthase (364 aa).

Residue K183 is modified to N6-(pyridoxal phosphate)lysine.

Belongs to the DegT/DnrJ/EryC1 family. As to quaternary structure, homodecamer. Pyridoxal 5'-phosphate is required as a cofactor.

It catalyses the reaction GDP-alpha-D-perosamine + 2-oxoglutarate = GDP-4-dehydro-alpha-D-rhamnose + L-glutamate. The protein operates within bacterial outer membrane biogenesis; LPS O-antigen biosynthesis. Divalent ions have no significant effect on activity. In terms of biological role, catalyzes the synthesis of GDP-perosamine from GDP-4-keto-6-deoxy-D-mannose and L-glutamate. Can use only L-glutamate as amino donor. This Escherichia coli O157:H7 protein is GDP-perosamine synthase.